The sequence spans 466 residues: MKSYDVVIIGGGPGGYNAAIRAGQLGLTVACVEGRSTLGGTCLNVGCMPSKALLHASELYEAASGDEFAHLGIEVKPTLNLAQMMKQKDESVTGLTKGIEYLFRKNKVDWIKGWGRLDGVGKVVVKAEDGSETALQAKDIVIATGSEPTPLPGVTIDNQRIIDSTGALSLPQVPKHLVVIGAGVIGLELGSVWRRLGSQVTVIEYLDRICPGTDTETAKTLQKALAKQGMVFKLGSKVTQATASADGVSLVLEPAAGGTAESLQADYVLVAIGRRPYTKGLNLESVGLETDKRGMLAQRTPPTSVPGVWVIGDVTSGPMLAHKAEDEAVACIERIAGKPHEVNYNLIPGVIYTRPELATVGKTEEQLKAEGRAYKVGKFPFTANSRAKINHETEGFAKVIADAETDEVLGVHLVGPSVSEMIGEFCVAMEFSASAEDIALTCHPHPTRSEALRQAAMNVDGMAMQI.

Residues 33–42, K51, and G115 each bind FAD; that span reads EGRSTLGGTC. C42 and C47 are disulfide-bonded. NAD(+) is bound by residues 181–185, E204, V238, and 271–274; these read GAGVI and AIGR. D313 and A321 together coordinate FAD. The active-site Proton acceptor is the H445.

This sequence belongs to the class-I pyridine nucleotide-disulfide oxidoreductase family. Homodimer. FAD is required as a cofactor.

It is found in the cytoplasm. It catalyses the reaction N(6)-[(R)-dihydrolipoyl]-L-lysyl-[protein] + NAD(+) = N(6)-[(R)-lipoyl]-L-lysyl-[protein] + NADH + H(+). Its function is as follows. LPD-3 may substitute for lipoamide dehydrogenase of the 2-oxoglutarate dehydrogenase and pyruvate multienzyme complexes when the latter is inactive or missing. This chain is Dihydrolipoyl dehydrogenase 3 (lpd3), found in Pseudomonas putida (Arthrobacter siderocapsulatus).